Consider the following 330-residue polypeptide: MAGWAGFELSALNPLRTLWLALAAAFLFALLLQLAPARLLPSCALFQDLLRYGKTKQSGSRRPAVCRAFDVPKRYFSHFYVISVVWNGSLLWLLSQSLFLGAPFPNWLSALLRTLGATQFQALEMESKASRMPAAELALSAFLVLVFLWVHSLRRLFECFYVSVFSNAAIHVVQYCFGLVYYVLVGLTVLSQVPMDDKNVYVLGKNLLIQARWFHILGMVMFFWSSAHQYKCHVILSNLRRNKKGVVIHCQHRIPFGDWFEYVSSANYLAELMIYISMAVTFGLHNLTWWLVVTYVFSSQALSAFFNHKFYRSTFVSYPKHRKAFLPFLF.

Over 1–16 (MAGWAGFELSALNPLR) the chain is Cytoplasmic. Residues 17–37 (TLWLALAAAFLFALLLQLAPA) traverse the membrane as a helical segment. The Lumenal segment spans residues 38–80 (RLLPSCALFQDLLRYGKTKQSGSRRPAVCRAFDVPKRYFSHFY). The chain crosses the membrane as a helical span at residues 81–101 (VISVVWNGSLLWLLSQSLFLG). Over 102 to 132 (APFPNWLSALLRTLGATQFQALEMESKASRM) the chain is Cytoplasmic. Residues 133 to 153 (PAAELALSAFLVLVFLWVHSL) traverse the membrane as a helical segment. Topologically, residues 154-169 (RRLFECFYVSVFSNAA) are lumenal. A helical transmembrane segment spans residues 170-190 (IHVVQYCFGLVYYVLVGLTVL). The Cytoplasmic segment spans residues 191 to 206 (SQVPMDDKNVYVLGKN). Residues 207–227 (LLIQARWFHILGMVMFFWSSA) traverse the membrane as a helical segment. Residues 228–277 (HQYKCHVILSNLRRNKKGVVIHCQHRIPFGDWFEYVSSANYLAELMIYIS) are Lumenal-facing. The helical transmembrane segment at 278 to 298 (MAVTFGLHNLTWWLVVTYVFS) threads the bilayer. Residues 299–330 (SQALSAFFNHKFYRSTFVSYPKHRKAFLPFLF) are Cytoplasmic-facing.

This sequence belongs to the steroid 5-alpha reductase family. Polyprenal reductase subfamily.

Its subcellular location is the endoplasmic reticulum membrane. The catalysed reaction is a di-trans,poly-cis-dolichal + NADP(+) = a di-trans,poly-cis-polyprenal + NADPH + H(+). It catalyses the reaction a 3-oxo-5alpha-steroid + NADP(+) = a 3-oxo-Delta(4)-steroid + NADPH + H(+). The enzyme catalyses androst-4-ene-3,17-dione + NADPH + H(+) = 5alpha-androstan-3,17-dione + NADP(+). It carries out the reaction 17beta-hydroxy-5alpha-androstan-3-one + NADP(+) = testosterone + NADPH + H(+). Its pathway is protein modification; protein glycosylation. Functionally, plays a key role in early steps of protein N-linked glycosylation by being involved in the conversion of polyprenol into dolichol. Acts as a polyprenal reductase that mediates the reduction of polyprenal into dolichal in a NADP-dependent mechanism. Dolichols are required for the synthesis of dolichol-linked monosaccharides and the oligosaccharide precursor used for N-glycosylation. Also able to convert testosterone (T) into 5-alpha-dihydrotestosterone (DHT). This is Polyprenal reductase from Mus musculus (Mouse).